Consider the following 360-residue polypeptide: Isopentenyl-diphosphate delta-isomerase (360 aa).

R12–K13 contacts substrate. FMN-binding positions include S69 to T71, S99, and N130. S99–R101 contributes to the substrate binding site. Substrate is bound at residue Q164. E165 lines the Mg(2+) pocket. FMN-binding positions include K196, T226, G277–R279, and A298–K299.

This sequence belongs to the IPP isomerase type 2 family. In terms of assembly, homooctamer. Dimer of tetramers. The cofactor is FMN. Requires NADPH as cofactor. Mg(2+) serves as cofactor.

It is found in the cytoplasm. It catalyses the reaction isopentenyl diphosphate = dimethylallyl diphosphate. In terms of biological role, involved in the biosynthesis of isoprenoids. Catalyzes the 1,3-allylic rearrangement of the homoallylic substrate isopentenyl (IPP) to its allylic isomer, dimethylallyl diphosphate (DMAPP). The sequence is that of Isopentenyl-diphosphate delta-isomerase from Halobacterium salinarum (strain ATCC 700922 / JCM 11081 / NRC-1) (Halobacterium halobium).